Here is an 82-residue protein sequence, read N- to C-terminus: MDSTQVKAAVIKQVQQEANLVNARTLIEKLQETCFEKCVPKPGTSLSSGETTCMTSCMEKYMAAWNMVNSAYIARLRQESGH.

Residues 34-57 carry the Twin CX3C motif motif; it reads CFEKCVPKPGTSLSSGETTCMTSC. Cystine bridges form between Cys-34/Cys-57 and Cys-38/Cys-53.

This sequence belongs to the small Tim family. As to quaternary structure, heterohexamer; composed of 3 copies of TIM8 and 3 copies of TIM13, named soluble 70 kDa complex. Associates with the TIM22 complex, whose core is composed of TIM22 and TIM54. Interacts with the transmembrane regions of multi-pass transmembrane proteins in transit.

The protein resides in the mitochondrion inner membrane. Its function is as follows. Mitochondrial intermembrane chaperone that participates in the import and insertion of some multi-pass transmembrane proteins into the mitochondrial inner membrane. Also required for the transfer of beta-barrel precursors from the TOM complex to the sorting and assembly machinery (SAM complex) of the outer membrane. Acts as a chaperone-like protein that protects the hydrophobic precursors from aggregation and guide them through the mitochondrial intermembrane space. The TIM8-TIM13 complex is non essential and only mediates the import of few proteins, while the predominant TIM9-TIM10 70 kDa complex is crucial and mediates the import of much more proteins. This Gibberella zeae (strain ATCC MYA-4620 / CBS 123657 / FGSC 9075 / NRRL 31084 / PH-1) (Wheat head blight fungus) protein is Mitochondrial import inner membrane translocase subunit TIM13 (TIM13).